The chain runs to 443 residues: Thymidine phosphorylase (443 aa).

This sequence belongs to the thymidine/pyrimidine-nucleoside phosphorylase family. Homodimer.

It carries out the reaction thymidine + phosphate = 2-deoxy-alpha-D-ribose 1-phosphate + thymine. It functions in the pathway pyrimidine metabolism; dTMP biosynthesis via salvage pathway; dTMP from thymine: step 1/2. The enzymes which catalyze the reversible phosphorolysis of pyrimidine nucleosides are involved in the degradation of these compounds and in their utilization as carbon and energy sources, or in the rescue of pyrimidine bases for nucleotide synthesis. This is Thymidine phosphorylase from Shewanella amazonensis (strain ATCC BAA-1098 / SB2B).